We begin with the raw amino-acid sequence, 232 residues long: Ribonuclease 3 (232 aa).

Residues 5-134 (QTVLKNHFAI…FLGALLLDKD (130 aa)) form the RNase III domain. Glu-47 contributes to the Mg(2+) binding site. Asp-51 is an active-site residue. The Mg(2+) site is built by Asp-120 and Glu-123. Glu-123 is a catalytic residue. The DRBM domain maps to 160–229 (DYKTHLQELL…AKNAVEKGLD (70 aa)).

The protein belongs to the ribonuclease III family. Homodimer. Requires Mg(2+) as cofactor.

It localises to the cytoplasm. It catalyses the reaction Endonucleolytic cleavage to 5'-phosphomonoester.. Digests double-stranded RNA. Involved in the processing of primary rRNA transcript to yield the immediate precursors to the large and small rRNAs (23S and 16S). Processes some mRNAs, and tRNAs when they are encoded in the rRNA operon. Processes pre-crRNA and tracrRNA of type II CRISPR loci if present in the organism. This Streptococcus pneumoniae (strain P1031) protein is Ribonuclease 3.